Here is a 453-residue protein sequence, read N- to C-terminus: Bifunctional protein GlmU (453 aa).

Residues 1–226 form a pyrophosphorylase region; that stretch reads MKFSAVILAA…AIEVEGVNDR (226 aa). UDP-N-acetyl-alpha-D-glucosamine-binding positions include 8–11, K22, Q73, 78–79, 100–102, G137, E151, N166, and N224; these read LAAG, GT, and YGD. D102 serves as a coordination point for Mg(2+). N224 lines the Mg(2+) pocket. Positions 227–247 are linker; that stretch reads AQLARLERAFQSMQAQKLLEQ. An N-acetyltransferase region spans residues 248–453; the sequence is GVMLRDPARF…TGWQRPVKQK (206 aa). UDP-N-acetyl-alpha-D-glucosamine-binding residues include R330 and K348. H360 serves as the catalytic Proton acceptor. The UDP-N-acetyl-alpha-D-glucosamine site is built by Y363 and N374. Residues A377, 383–384, S402, A420, and R437 contribute to the acetyl-CoA site; that span reads NY.

The protein in the N-terminal section; belongs to the N-acetylglucosamine-1-phosphate uridyltransferase family. This sequence in the C-terminal section; belongs to the transferase hexapeptide repeat family. Homotrimer. It depends on Mg(2+) as a cofactor.

The protein resides in the cytoplasm. The catalysed reaction is alpha-D-glucosamine 1-phosphate + acetyl-CoA = N-acetyl-alpha-D-glucosamine 1-phosphate + CoA + H(+). The enzyme catalyses N-acetyl-alpha-D-glucosamine 1-phosphate + UTP + H(+) = UDP-N-acetyl-alpha-D-glucosamine + diphosphate. It functions in the pathway nucleotide-sugar biosynthesis; UDP-N-acetyl-alpha-D-glucosamine biosynthesis; N-acetyl-alpha-D-glucosamine 1-phosphate from alpha-D-glucosamine 6-phosphate (route II): step 2/2. It participates in nucleotide-sugar biosynthesis; UDP-N-acetyl-alpha-D-glucosamine biosynthesis; UDP-N-acetyl-alpha-D-glucosamine from N-acetyl-alpha-D-glucosamine 1-phosphate: step 1/1. The protein operates within bacterial outer membrane biogenesis; LPS lipid A biosynthesis. Functionally, catalyzes the last two sequential reactions in the de novo biosynthetic pathway for UDP-N-acetylglucosamine (UDP-GlcNAc). The C-terminal domain catalyzes the transfer of acetyl group from acetyl coenzyme A to glucosamine-1-phosphate (GlcN-1-P) to produce N-acetylglucosamine-1-phosphate (GlcNAc-1-P), which is converted into UDP-GlcNAc by the transfer of uridine 5-monophosphate (from uridine 5-triphosphate), a reaction catalyzed by the N-terminal domain. The chain is Bifunctional protein GlmU from Vibrio parahaemolyticus serotype O3:K6 (strain RIMD 2210633).